Consider the following 123-residue polypeptide: Kininogen (123 aa).

Bradykinin is released from kininogen by kallikrein. Post-translationally, N-glycosylated. Contains sulfated N-acetylglucosamine and O-acetylated sialic acids as terminal elements on biantennary and triantennary N-glycans.

Its function is as follows. Inhibits papain and ficin (cysteine proteinases) but not trypsin (a serine proteinase). The chain is Kininogen from Gadus morhua (Atlantic cod).